Reading from the N-terminus, the 707-residue chain is Acetyl-coenzyme A synthetase 1 (707 aa).

Residues R242–K245 and T361 each bind CoA. ATP-binding positions include G437–P439, D461–T466, D553, and R568. Position 576 (S576) interacts with CoA. R579 is an ATP binding site. R644 contacts CoA. The Microbody targeting signal motif lies at V705–L707.

It belongs to the ATP-dependent AMP-binding enzyme family.

Its subcellular location is the microsome. It localises to the endoplasmic reticulum. It carries out the reaction acetate + ATP + CoA = acetyl-CoA + AMP + diphosphate. May be required for assimilation of ethanol and acetate. This Kluyveromyces lactis (strain ATCC 8585 / CBS 2359 / DSM 70799 / NBRC 1267 / NRRL Y-1140 / WM37) (Yeast) protein is Acetyl-coenzyme A synthetase 1 (ACS1).